The primary structure comprises 807 residues: Tyrosine-protein phosphatase non-receptor type 22 (807 aa).

A Tyrosine-protein phosphatase domain is found at 24–289; it reads FANEFLKLKR…ELVYNAVLEL (266 aa). A Phosphoserine; by PKC/PRKCD modification is found at Ser-35. Cys-129 and Cys-227 are oxidised to a cystine. Cys-227 functions as the Phosphocysteine intermediate in the catalytic mechanism. Substrate contacts are provided by residues 227–233 and Gln-274; that span reads CSAGCGR. Phosphoserine is present on residues Ser-449, Ser-635, Ser-684, and Ser-692. Disordered regions lie at residues 676-700 and 724-746; these read SVKL…LPER and SYPD…GKSF.

It belongs to the protein-tyrosine phosphatase family. Non-receptor class 4 subfamily. As to quaternary structure, interacts with CSK. Interacts with LPXN. Interacts with CBL. Interacts with TRAF3 (via MATH domain); the interaction promotes TRAF3 polyubiquitination. Post-translationally, phosphorylation on Ser-35 by PKC/PRKCD abrogates its ability to dephosphorylate and inactivate the SRC family kinases. As to expression, expressed in bone marrow, B and T-cells, PBMCs, natural killer cells, monocytes, dendritic cells and neutrophils. Both isoform 1 and 4 are predominantly expressed in lymphoid tissues and cells. Isoform 1 is expressed in thymocytes and both mature B and T-cells.

Its subcellular location is the cytoplasm. The catalysed reaction is O-phospho-L-tyrosyl-[protein] + H2O = L-tyrosyl-[protein] + phosphate. The enzyme catalyses N-(5Z,8Z,11Z,14Z-eicosatetraenoyl)-ethanolamine phosphate + H2O = N-(5Z,8Z,11Z,14Z-eicosatetraenoyl)-ethanolamine + phosphate. Down-regulated by phosphorylation. Acts as a negative regulator of T-cell receptor (TCR) signaling by direct dephosphorylation of the Src family kinases LCK and FYN, ITAMs of the TCRz/CD3 complex, as well as ZAP70, VAV, VCP and other key signaling molecules. Associates with and probably dephosphorylates CBL. Dephosphorylates LCK at its activating 'Tyr-394' residue. Dephosphorylates ZAP70 at its activating 'Tyr-493' residue. Dephosphorylates the immune system activator SKAP2. Positively regulates toll-like receptor (TLR)-induced type 1 interferon production. Promotes host antiviral responses mediated by type 1 interferon. Regulates NOD2-induced pro-inflammatory cytokine secretion and autophagy. Acts as an activator of NLRP3 inflammasome assembly by mediating dephosphorylation of 'Tyr-861' of NLRP3. Dephosphorylates phospho-anandamide (p-AEA), an endocannabinoid to anandamide (also called N-arachidonoylethanolamide). The chain is Tyrosine-protein phosphatase non-receptor type 22 (PTPN22) from Homo sapiens (Human).